Here is a 444-residue protein sequence, read N- to C-terminus: ATP-dependent protease ATPase subunit HslU (444 aa).

Residues I20 and 62–67 each bind ATP; that span reads GVGKTE. The segment at 130–158 is disordered; the sequence is EDRILDALVPPPRGASGEPERGEDNSARQ. The ATP site is built by D257, E322, and R394.

Belongs to the ClpX chaperone family. HslU subfamily. As to quaternary structure, a double ring-shaped homohexamer of HslV is capped on each side by a ring-shaped HslU homohexamer. The assembly of the HslU/HslV complex is dependent on binding of ATP.

It is found in the cytoplasm. ATPase subunit of a proteasome-like degradation complex; this subunit has chaperone activity. The binding of ATP and its subsequent hydrolysis by HslU are essential for unfolding of protein substrates subsequently hydrolyzed by HslV. HslU recognizes the N-terminal part of its protein substrates and unfolds these before they are guided to HslV for hydrolysis. This Bordetella parapertussis (strain 12822 / ATCC BAA-587 / NCTC 13253) protein is ATP-dependent protease ATPase subunit HslU.